Here is an 827-residue protein sequence, read N- to C-terminus: Villin-1 (827 aa).

The interval 1-126 (MTKLNAQVKG…IRKGGVASGM (126 aa)) is necessary for homodimerization. Positions 1-734 (MTKLNAQVKG…YDDLKAELGN (734 aa)) are core. The stretch at 27–76 (MQMVPVPSSTFGSFFDGDCYVVLAIHKTSSTLSYDIHYWIGQDSSQDEQG) is one Gelsolin-like 1 repeat. LPA/PIP2-binding site regions lie at residues 112-119 (KQGLVIRK) and 138-146 (RLLHVKGKR). 2 Gelsolin-like repeats span residues 148–188 (VLAG…MERL) and 265–309 (LVVR…QERS). Residue serine 366 is modified to Phosphoserine. Gelsolin-like repeat units follow at residues 407–457 (DLEL…DEIA), 528–568 (TKAF…DERE), and 631–672 (FLAT…EEKK). A phosphoserine mark is found at serine 735 and serine 776. A headpiece region spans residues 735 to 827 (SGDWSQIADE…QNIKKEKGLF (93 aa)). Positions 761-827 (SGPLPTFPLE…QNIKKEKGLF (67 aa)) constitute an HP domain. The segment at 816–824 (KQQNIKKEK) is LPA/PIP2-binding site 3.

The protein belongs to the villin/gelsolin family. Monomer. Homodimer; homodimerization is necessary for actin-bundling. Associates with F-actin; phosphorylation at tyrosine residues decreases the association with F-actin. Interacts (phosphorylated at C-terminus tyrosine phosphorylation sites) with PLCG1 (via the SH2 domains). Interacts (phosphorylated form) with PLCG1; the interaction is enhanced by hepatocyte growth factor (HGF). In terms of processing, phosphorylated on tyrosine residues by SRC. The unphosphorylated form increases the initial rate of actin-nucleating activity, whereas the tyrosine phosphorylated form inhibits actin-nucleating activity, enhances actin-bundling activity and enhances actin-severing activity by reducing high Ca(2+) requirements. The tyrosine phosphorylated form does not regulate actin-capping activity. Tyrosine phosphorylation is essential for cell migration: tyrosine phosphorylation sites in the N-terminus half regulate actin reorganization and cell morphology, whereas tyrosine phosphorylation sites in the C-terminus half regulate cell migration via interaction with PLCG1. Tyrosine phosphorylation is induced by epidermal growth factor (EGF) and stimulates cell migration. In terms of tissue distribution, expressed in small intestin, colon, kidney and enterocytes (at protein level).

Its subcellular location is the cytoplasm. The protein resides in the cytoskeleton. It is found in the cell projection. The protein localises to the microvillus. It localises to the lamellipodium. Its subcellular location is the ruffle. The protein resides in the filopodium tip. It is found in the filopodium. In terms of biological role, epithelial cell-specific Ca(2+)-regulated actin-modifying protein that modulates the reorganization of microvillar actin filaments. Plays a role in the actin nucleation, actin filament bundle assembly, actin filament capping and severing. Binds phosphatidylinositol 4,5-bisphosphate (PIP2) and lysophosphatidic acid (LPA); binds LPA with higher affinity than PIP2. Binding to LPA increases its phosphorylation by SRC and inhibits all actin-modifying activities. Binding to PIP2 inhibits actin-capping and -severing activities but enhances actin-bundling activity. Regulates the intestinal epithelial cell morphology, cell invasion, cell migration and apoptosis. Protects against apoptosis induced by dextran sodium sulfate (DSS) in the gastrointestinal epithelium. Appears to regulate cell death by maintaining mitochondrial integrity. Enhances hepatocyte growth factor (HGF)-induced epithelial cell motility, chemotaxis and wound repair. Upon S.flexneri cell infection, its actin-severing activity enhances actin-based motility of the bacteria and plays a role during the dissemination. This Mus musculus (Mouse) protein is Villin-1 (Vil1).